The chain runs to 84 residues: Cell division topological specificity factor (84 aa).

Belongs to the MinE family.

Its function is as follows. Prevents the cell division inhibition by proteins MinC and MinD at internal division sites while permitting inhibition at polar sites. This ensures cell division at the proper site by restricting the formation of a division septum at the midpoint of the long axis of the cell. This chain is Cell division topological specificity factor, found in Chromohalobacter salexigens (strain ATCC BAA-138 / DSM 3043 / CIP 106854 / NCIMB 13768 / 1H11).